The primary structure comprises 182 residues: Small ribosomal subunit protein uS4c (182 aa).

Positions 82–143 (MRLDNILFRL…KERSKVLIQN (62 aa)) constitute an S4 RNA-binding domain.

Belongs to the universal ribosomal protein uS4 family. Part of the 30S ribosomal subunit. Contacts protein S5. The interaction surface between S4 and S5 is involved in control of translational fidelity.

It localises to the plastid. Its subcellular location is the chloroplast. Functionally, one of the primary rRNA binding proteins, it binds directly to 16S rRNA where it nucleates assembly of the body of the 30S subunit. With S5 and S12 plays an important role in translational accuracy. The protein is Small ribosomal subunit protein uS4c (rps4) of Tigridia sp. (strain Lejeune 1997).